The sequence spans 127 residues: Transthyretin (127 aa).

C10 is modified (sulfocysteine). L-thyroxine is bound at residue K15. 4-carboxyglutamate is present on E42. Position 54 (E54) interacts with L-thyroxine. N98 carries N-linked (GlcNAc...) asparagine glycosylation. S117 lines the L-thyroxine pocket.

It belongs to the transthyretin family. In terms of assembly, homotetramer. Dimer of dimers. In the homotetramer, subunits assemble around a central channel that can accommodate two ligand molecules. Interacts with RBP4. In terms of processing, sulfonation of the reactive cysteine Cys-10 enhances the stability of the native conformation of TTR, avoiding misassembly of the protein leading to amyloid formation. As to expression, detected in serum (at protein level).

The protein localises to the secreted. In terms of biological role, thyroid hormone-binding protein. Probably transports thyroxine from the bloodstream to the brain. The chain is Transthyretin (TTR) from Oryctolagus cuniculus (Rabbit).